Here is a 688-residue protein sequence, read N- to C-terminus: Two-component response regulator ORR23 (688 aa).

Residues 25–140 (RVLAVDDDPV…ELRNIWQHVI (116 aa)) form the Response regulatory domain. Asp-76 is subject to 4-aspartylphosphate. The disordered stretch occupies residues 161–212 (PPNADSDHVHGHVTCGSPDQSGRPSKKRKEYCSEEEDEGEVNTQDIDDPSAP). Acidic residues predominate over residues 193–208 (SEEEDEGEVNTQDIDD). The myb-like GARP DNA-binding region spans 211 to 270 (APKKPRVVWSVELHRKFVAAVNQLGIDKAVPKRILELMNVEKLTRENVASHLQKYRLYLK).

The protein belongs to the ARR family. Type-B subfamily. Two-component system major event consists of a His-to-Asp phosphorelay between a sensor histidine kinase (HK) and a response regulator (RR). In plants, the His-to-Asp phosphorelay involves an additional intermediate named Histidine-containing phosphotransfer protein (HPt). This multistep phosphorelay consists of a His-Asp-His-Asp sequential transfer of a phosphate group between first a His and an Asp of the HK protein, followed by the transfer to a conserved His of the HPt protein and finally the transfer to an Asp in the receiver domain of the RR protein.

Its subcellular location is the nucleus. In terms of biological role, transcriptional activator that binds specific DNA sequence. Functions as a response regulator involved in His-to-Asp phosphorelay signal transduction system. Phosphorylation of the Asp residue in the receiver domain activates the ability of the protein to promote the transcription of target genes. May directly activate some type-A response regulators in response to cytokinins. The chain is Two-component response regulator ORR23 from Oryza sativa subsp. indica (Rice).